A 600-amino-acid chain; its full sequence is UvrABC system protein C (600 aa).

Residues 15–92 (DKPGCYLMKD…IKKYQPYYNV (78 aa)) enclose the GIY-YIG domain. The UVR domain occupies 197–232 (AQVKQDLTEKMTQASMDLEFERAAEIRDQLKYIEQT).

Belongs to the UvrC family. In terms of assembly, interacts with UvrB in an incision complex.

It is found in the cytoplasm. The UvrABC repair system catalyzes the recognition and processing of DNA lesions. UvrC both incises the 5' and 3' sides of the lesion. The N-terminal half is responsible for the 3' incision and the C-terminal half is responsible for the 5' incision. This chain is UvrABC system protein C, found in Lactobacillus johnsonii (strain CNCM I-12250 / La1 / NCC 533).